A 118-amino-acid chain; its full sequence is Large ribosomal subunit protein bL20 (118 aa).

This sequence belongs to the bacterial ribosomal protein bL20 family.

Functionally, binds directly to 23S ribosomal RNA and is necessary for the in vitro assembly process of the 50S ribosomal subunit. It is not involved in the protein synthesizing functions of that subunit. The sequence is that of Large ribosomal subunit protein bL20 from Leptothrix cholodnii (strain ATCC 51168 / LMG 8142 / SP-6) (Leptothrix discophora (strain SP-6)).